The primary structure comprises 206 residues: Small ribosomal subunit protein uS4 (206 aa).

The region spanning 94–157 is the S4 RNA-binding domain; it reads RRLDNVVYRL…RSRTYFKNLV (64 aa).

This sequence belongs to the universal ribosomal protein uS4 family. As to quaternary structure, part of the 30S ribosomal subunit. Contacts protein S5. The interaction surface between S4 and S5 is involved in control of translational fidelity.

One of the primary rRNA binding proteins, it binds directly to 16S rRNA where it nucleates assembly of the body of the 30S subunit. Functionally, with S5 and S12 plays an important role in translational accuracy. The sequence is that of Small ribosomal subunit protein uS4 from Chloroflexus aurantiacus (strain ATCC 29364 / DSM 637 / Y-400-fl).